The sequence spans 471 residues: 5-hydroxytryptamine receptor 2A (471 aa).

The Extracellular segment spans residues M1–L80. N-linked (GlcNAc...) asparagine glycans are attached at residues N8, N38, N44, N51, and N54. The chain crosses the membrane as a helical span at residues T81–M97. Over A98–Y111 the chain is Cytoplasmic. The chain crosses the membrane as a helical span at residues F112–Y137. Topologically, residues G138 to K146 are extracellular. A helical membrane pass occupies residues L147–L171. C148 and C227 are oxidised to a cystine. D155 is a binding site for serotonin. Positions D172 to Y174 match the DRY motif; important for ligand-induced conformation changes motif. The Cytoplasmic portion of the chain corresponds to D172–K191. A helical membrane pass occupies residues A192–L215. Topologically, residues Q216–D232 are extracellular. Residues N233–I258 form a helical membrane-spanning segment. Topologically, residues K259–C322 are cytoplasmic. The residue at position 280 (S280) is a Phosphoserine. Residues K323 to I348 form a helical membrane-spanning segment. Position 343 (N343) interacts with serotonin. The cysteines at positions 349 and 353 are disulfide-linked. Topologically, residues C349–D356 are extracellular. Residues V357–L382 form a helical membrane-spanning segment. The NPxxY motif; important for ligand-induced conformation changes and signaling signature appears at N376 to Y380. The Cytoplasmic portion of the chain corresponds to F383–V471. A disordered region spans residues K450 to V471. Positions Q451 to N465 are enriched in basic and acidic residues. A PDZ-binding motif is present at residues S469 to V471.

This sequence belongs to the G-protein coupled receptor 1 family. In terms of assembly, interacts (via C-terminus) with MPDZ and PATJ. May interact (via C-terminus) with MPP3, PRDX6, DLG4, DLG1, CASK, APBA1 and MAGI2. Interacts with GRM2 and DRD2; this may affect signaling.

The protein localises to the cell membrane. It is found in the cell projection. The protein resides in the dendrite. It localises to the axon. Its subcellular location is the cytoplasmic vesicle. The protein localises to the membrane. It is found in the caveola. The protein resides in the presynapse. G-protein coupled receptor activity is regulated by lipids: oleamide increases HTR2A-mediated activity. In terms of biological role, G-protein coupled receptor for 5-hydroxytryptamine (serotonin). Also functions as a receptor for various drugs and psychoactive substances, including mescaline, psilocybin, 1-(2,5-dimethoxy-4-iodophenyl)-2-aminopropane (DOI) and lysergic acid diethylamide (LSD). Ligand binding causes a conformation change that triggers signaling via guanine nucleotide-binding proteins (G proteins) and modulates the activity of downstream effectors. HTR2A is coupled to G(q)/G(11) G alpha proteins and activates phospholipase C-beta, releasing diacylglycerol (DAG) and inositol 1,4,5-trisphosphate (IP3) second messengers that modulate the activity of phosphatidylinositol 3-kinase and promote the release of Ca(2+) ions from intracellular stores, respectively. Beta-arrestin family members inhibit signaling via G proteins and mediate activation of alternative signaling pathways. Affects neural activity, perception, cognition and mood. Plays a role in the regulation of behavior, including responses to anxiogenic situations and psychoactive substances. Plays a role in intestinal smooth muscle contraction, and may play a role in arterial vasoconstriction. The sequence is that of 5-hydroxytryptamine receptor 2A (HTR2A) from Macaca mulatta (Rhesus macaque).